The sequence spans 546 residues: Coatomer subunit delta (546 aa).

The interval 190 to 440 (NRFMGSKDPN…VIFTIPVFPQ (251 aa)) is interaction with DSL1. The interval 236–287 (PMATSQRAGHSATGGMKLGGGAGRRAGAAPRPSAISSASSGTPPPPEEDVPE) is disordered. Low complexity predominate over residues 260-276 (RAGAAPRPSAISSASSG). A Phosphothreonine modification is found at Thr-277. Residues 288–546 (NNGILISIKE…SLKSDEYLVQ (259 aa)) enclose the MHD domain.

The protein belongs to the adaptor complexes medium subunit family. Delta-COP subfamily. Oligomeric complex that consists of at least the alpha, beta, beta', gamma, delta, epsilon and zeta subunits. Interacts with DSL1.

The protein resides in the cytoplasm. Its subcellular location is the golgi apparatus membrane. The protein localises to the cytoplasmic vesicle. It localises to the COPI-coated vesicle membrane. In terms of biological role, the coatomer is a cytosolic protein complex that binds to dilysine motifs and reversibly associates with Golgi non-clathrin-coated vesicles, which further mediate biosynthetic protein transport from the ER, via the Golgi up to the trans Golgi network. Coatomer complex is required for budding from Golgi membranes, and is essential for the retrograde Golgi-to-ER transport of dilysine-tagged proteins. This is Coatomer subunit delta (RET2) from Saccharomyces cerevisiae (strain ATCC 204508 / S288c) (Baker's yeast).